The chain runs to 276 residues: Cytoskeleton protein RodZ (276 aa).

Topologically, residues 1–110 (MTSMRKKTIG…SSKKKKKKTS (110 aa)) are cytoplasmic. Residues 111–131 (FLPLFYFILFALSILIFVTYY) form a helical; Signal-anchor for type II membrane protein membrane-spanning segment. Topologically, residues 132 to 276 (VWNYIQTQPE…GQITVTFTKN (145 aa)) are extracellular.

It belongs to the RodZ family. In terms of assembly, interacts with MltG and MreC in the elongasome. Interacts with KhpB (also called EloR/Jag).

It localises to the cell membrane. In terms of biological role, cytoskeletal protein that is involved in cell-shape control through regulation of the length of the long axis. Probably part of the elongasome which synthesizes peripheral peptidoglycan. This chain is Cytoskeleton protein RodZ, found in Streptococcus pneumoniae (strain ATCC BAA-255 / R6).